The sequence spans 54 residues: uncharacterized protein (54 aa).

The N-terminal stretch at 1–13 is a signal peptide; it reads MLLCFHMCQRIMW.

It is found in the secreted. This is an uncharacterized protein from Saccharomyces cerevisiae (strain ATCC 204508 / S288c) (Baker's yeast).